A 101-amino-acid chain; its full sequence is NAD(P)H-quinone oxidoreductase subunit 4L, chloroplastic (101 aa).

A run of 3 helical transmembrane segments spans residues 2 to 22 (MFEL…YGLI), 32 to 52 (ICLE…SDLF), and 61 to 81 (IFAI…LSIL).

The protein belongs to the complex I subunit 4L family. In terms of assembly, NDH is composed of at least 16 different subunits, 5 of which are encoded in the nucleus.

It localises to the plastid. The protein resides in the chloroplast thylakoid membrane. It carries out the reaction a plastoquinone + NADH + (n+1) H(+)(in) = a plastoquinol + NAD(+) + n H(+)(out). The enzyme catalyses a plastoquinone + NADPH + (n+1) H(+)(in) = a plastoquinol + NADP(+) + n H(+)(out). Its function is as follows. NDH shuttles electrons from NAD(P)H:plastoquinone, via FMN and iron-sulfur (Fe-S) centers, to quinones in the photosynthetic chain and possibly in a chloroplast respiratory chain. The immediate electron acceptor for the enzyme in this species is believed to be plastoquinone. Couples the redox reaction to proton translocation, and thus conserves the redox energy in a proton gradient. The polypeptide is NAD(P)H-quinone oxidoreductase subunit 4L, chloroplastic (Lolium perenne (Perennial ryegrass)).